Reading from the N-terminus, the 232-residue chain is Ornithine carbamoyltransferase (232 aa).

Carbamoyl phosphate is bound by residues Q15, R39, and 66–69 (HPTQ). L-ornithine contacts are provided by residues N99, D163, and 167-168 (SM). Residues 204-207 (HCLP) and T232 contribute to the carbamoyl phosphate site.

This sequence belongs to the aspartate/ornithine carbamoyltransferase superfamily. OTCase family.

It localises to the cytoplasm. It catalyses the reaction carbamoyl phosphate + L-ornithine = L-citrulline + phosphate + H(+). Its pathway is amino-acid biosynthesis; L-arginine biosynthesis; L-arginine from L-ornithine and carbamoyl phosphate: step 1/3. Its function is as follows. Reversibly catalyzes the transfer of the carbamoyl group from carbamoyl phosphate (CP) to the N(epsilon) atom of ornithine (ORN) to produce L-citrulline. This Neisseria subflava protein is Ornithine carbamoyltransferase (argF).